The chain runs to 234 residues: Octanoyltransferase (234 aa).

Residues 42–226 (PDTPDEFWVV…ELASLIGYET (185 aa)) form the BPL/LPL catalytic domain. Substrate is bound by residues 81 to 88 (RGGQVTYH), 157 to 159 (SLG), and 170 to 172 (GLA). The active-site Acyl-thioester intermediate is Cys-188.

It belongs to the LipB family.

It is found in the cytoplasm. It catalyses the reaction octanoyl-[ACP] + L-lysyl-[protein] = N(6)-octanoyl-L-lysyl-[protein] + holo-[ACP] + H(+). Its pathway is protein modification; protein lipoylation via endogenous pathway; protein N(6)-(lipoyl)lysine from octanoyl-[acyl-carrier-protein]: step 1/2. Functionally, catalyzes the transfer of endogenously produced octanoic acid from octanoyl-acyl-carrier-protein onto the lipoyl domains of lipoate-dependent enzymes. Lipoyl-ACP can also act as a substrate although octanoyl-ACP is likely to be the physiological substrate. The protein is Octanoyltransferase of Aeromonas hydrophila subsp. hydrophila (strain ATCC 7966 / DSM 30187 / BCRC 13018 / CCUG 14551 / JCM 1027 / KCTC 2358 / NCIMB 9240 / NCTC 8049).